The chain runs to 198 residues: Syndecan-4 (198 aa).

The first 23 residues, 1–23 (MAPACLLAPLLLLLLGGFPLVPG), serve as a signal peptide directing secretion. The Extracellular segment spans residues 24-145 (ESIRETEVID…QGSNIFERTE (122 aa)). Disordered regions lie at residues 42-76 (YFSGALPDDEDAGGSDDFELSGSGDLDDTEEPRPF) and 94-130 (AQPGIRVPSEPKELEENEVIPKRAPSDVGDDMSNKVS). Ser-44, Ser-62, and Ser-64 each carry an O-linked (Xyl...) (glycosaminoglycan) serine glycan. Positions 48–71 (PDDEDAGGSDDFELSGSGDLDDTE) are enriched in acidic residues. Positions 102-118 (SEPKELEENEVIPKRAP) are enriched in basic and acidic residues. Residues 146–170 (VLAALIVGGVVGILFAVFLILLLVY) traverse the membrane as a helical segment. Residues 171–198 (RMKKKDEGSYDLGKKPIYKKAPTNEFYA) lie on the Cytoplasmic side of the membrane.

This sequence belongs to the syndecan proteoglycan family. In terms of assembly, homodimer. Interacts with CDCP1 and SDCBP. Interacts (via its cytoplasmic domain) with GIPC (via its PDZ domain). Interacts (via its cytoplasmic domain) with NUDT16L1. Interacts with DNM2; this interaction is markedly enhanced at focal ahesion site upon induction of focal adhesions and stress-fiber formation. Post-translationally, shedding is enhanced by a number of factors such as heparanase, thrombin or EGF. Also by stress and wound healing. PMA-mediated shedding is inhibited by TIMP3. O-glycosylated; contains both chondroitin sulfate and heparan sulfate. Ser-44, Ser-62 and Ser-64 can all be modified by either chondroitin sulfate or heparan sulfate, and the protein exists in forms that contain only chondroitin sulfate, only heparan sulfate and both chondroitin sulfate and heparan sulfate. Ubiquitous. Highest levels in liver, kidney and lung.

The protein localises to the membrane. The protein resides in the secreted. Cell surface proteoglycan which regulates exosome biogenesis in concert with SDCBP and PDCD6IP. The chain is Syndecan-4 from Mus musculus (Mouse).